The chain runs to 437 residues: tRNA-2-methylthio-N(6)-dimethylallyladenosine synthase (437 aa).

Residues 5-121 (KKLYIKTYGC…LPELTARAAT (117 aa)) enclose the MTTase N-terminal domain. Residues C14, C50, C84, C159, C163, and C166 each contribute to the [4Fe-4S] cluster site. Positions 145 to 371 (AKRGPTAFLT…QALLTRQQRA (227 aa)) constitute a Radical SAM core domain. The region spanning 374-436 (DAKVGTTARV…ANSLRGVLIA (63 aa)) is the TRAM domain.

This sequence belongs to the methylthiotransferase family. MiaB subfamily. Monomer. The cofactor is [4Fe-4S] cluster.

Its subcellular location is the cytoplasm. The catalysed reaction is N(6)-dimethylallyladenosine(37) in tRNA + (sulfur carrier)-SH + AH2 + 2 S-adenosyl-L-methionine = 2-methylsulfanyl-N(6)-dimethylallyladenosine(37) in tRNA + (sulfur carrier)-H + 5'-deoxyadenosine + L-methionine + A + S-adenosyl-L-homocysteine + 2 H(+). In terms of biological role, catalyzes the methylthiolation of N6-(dimethylallyl)adenosine (i(6)A), leading to the formation of 2-methylthio-N6-(dimethylallyl)adenosine (ms(2)i(6)A) at position 37 in tRNAs that read codons beginning with uridine. This chain is tRNA-2-methylthio-N(6)-dimethylallyladenosine synthase, found in Dinoroseobacter shibae (strain DSM 16493 / NCIMB 14021 / DFL 12).